A 249-amino-acid polypeptide reads, in one-letter code: MAQAVEEWYRQMPIITRSYLTAAVVTTVGCTLEIISPYHLYLNPKLVVQHYEIWRLVTNFLYFRKMDLDFLFHMFFLARYCKLLEENSFRGRTADFFYMLLFGATVLTGIVLIGGMIPYISETFARILFLSNSLTFMMVYVWSKHNPFIHMSFLGLFTFTAAYLPWVLLGFSILVGSSTWVDLLGMIAGHVYYFLEDVYPRMTGRRPLKTPSFIKALFADDNVVVAQPPNAGIGAGARFGAIGVDPQAQ.

The Cytoplasmic portion of the chain corresponds to 1-21; the sequence is MAQAVEEWYRQMPIITRSYLT. Residues 22–42 form a helical membrane-spanning segment; sequence AAVVTTVGCTLEIISPYHLYL. The Lumenal portion of the chain corresponds to 43-96; the sequence is NPKLVVQHYEIWRLVTNFLYFRKMDLDFLFHMFFLARYCKLLEENSFRGRTADF. Residues 97–117 form a helical membrane-spanning segment; that stretch reads FYMLLFGATVLTGIVLIGGMI. Residues 118–122 are Cytoplasmic-facing; the sequence is PYISE. A helical membrane pass occupies residues 123–143; the sequence is TFARILFLSNSLTFMMVYVWS. At 144-152 the chain is on the lumenal side; sequence KHNPFIHMS. A helical transmembrane segment spans residues 153-173; sequence FLGLFTFTAAYLPWVLLGFSI. The Cytoplasmic segment spans residues 174–249; it reads LVGSSTWVDL…GAIGVDPQAQ (76 aa).

It belongs to the derlin family. As to expression, expressed in roots, stalks, leaves, immature ears, embryo and endosperm.

The protein localises to the endoplasmic reticulum membrane. Functionally, may be involved in the degradation process of specific misfolded endoplasmic reticulum (ER) luminal proteins. The polypeptide is Derlin-2.2 (DER2.2) (Zea mays (Maize)).